Reading from the N-terminus, the 305-residue chain is tRNA dimethylallyltransferase (305 aa).

Residue 8–15 coordinates ATP; the sequence is GPTGTGKS. Residue 10-15 coordinates substrate; sequence TGTGKS.

This sequence belongs to the IPP transferase family. In terms of assembly, monomer. It depends on Mg(2+) as a cofactor.

The catalysed reaction is adenosine(37) in tRNA + dimethylallyl diphosphate = N(6)-dimethylallyladenosine(37) in tRNA + diphosphate. Its function is as follows. Catalyzes the transfer of a dimethylallyl group onto the adenine at position 37 in tRNAs that read codons beginning with uridine, leading to the formation of N6-(dimethylallyl)adenosine (i(6)A). In Mycobacterium sp. (strain KMS), this protein is tRNA dimethylallyltransferase.